Reading from the N-terminus, the 301-residue chain is Protein FdhE homolog (301 aa).

It belongs to the FdhE family.

The protein resides in the cytoplasm. Necessary for formate dehydrogenase activity. The polypeptide is Protein FdhE homolog (Shewanella baltica (strain OS185)).